The sequence spans 344 residues: Neurotrimin (344 aa).

Positions 1–33 (MGVCGYLFLPWKCLVVVSLRLLFLVPTGVPVRS) are cleaved as a signal peptide. Ig-like C2-type domains follow at residues 39-126 (PKAM…PKTS), 136-218 (PKIV…VKVT), and 222-309 (PPYI…ASIM). N-linked (GlcNAc...) asparagine glycosylation is found at Asn44, Asn70, and Asn152. Cys57 and Cys115 form a disulfide bridge. Cystine bridges form between Cys157–Cys201 and Cys243–Cys295. N-linked (GlcNAc...) asparagine glycans are attached at residues Asn284, Asn292, and Asn305. Asn321 carries GPI-anchor amidated asparagine; alternate lipidation. N-linked (GlcNAc...) asparagine; alternate glycosylation is present at Asn321. A propeptide spans 322-344 (GTSRRAGCIWLLPLLVLHLLLKF) (removed in mature form).

Belongs to the immunoglobulin superfamily. IgLON family.

Its subcellular location is the cell membrane. Neural cell adhesion molecule. In Mus musculus (Mouse), this protein is Neurotrimin (Ntm).